Here is a 106-residue protein sequence, read N- to C-terminus: Cell division protein FtsB (106 aa).

At 1 to 3 the chain is on the cytoplasmic side; sequence MGK. The chain crosses the membrane as a helical span at residues 4–21; sequence LTLLLLVLLGWLQYSLWL. Residues 22-106 are Periplasmic-facing; that stretch reads GKNGIHDYVR…SRPSTPNNTQ (85 aa). Residues 29 to 70 are a coiled coil; the sequence is YVRVKNDVAMQERNNSKLKARNDQLSAEIDDLTGGQEAIEER.

Belongs to the FtsB family. Part of a complex composed of FtsB, FtsL and FtsQ.

The protein resides in the cell inner membrane. Essential cell division protein. May link together the upstream cell division proteins, which are predominantly cytoplasmic, with the downstream cell division proteins, which are predominantly periplasmic. The chain is Cell division protein FtsB from Photorhabdus laumondii subsp. laumondii (strain DSM 15139 / CIP 105565 / TT01) (Photorhabdus luminescens subsp. laumondii).